The sequence spans 1188 residues: uncharacterized protein (1188 aa).

4 disordered regions span residues 126-468 (GDLR…SQME), 484-771 (EDRF…LYKP), 790-823 (ARGG…TDEL), and 847-1039 (QRAQ…FSRF). 3 stretches are compositionally biased toward pro residues: residues 139 to 151 (IPPP…PGPP), 159 to 193 (GGSP…PPPV), and 208 to 240 (IPTP…PAPA). Ser-260 carries the post-translational modification Phosphoserine. Residues 322–331 (EAPRKEEGAT) show a composition bias toward basic and acidic residues. The segment covering 389 to 418 (TPPPAPPLPPPAPPLPPPAPPLPPAAPPLP) has biased composition (pro residues). Residues 432 to 441 (KTPKSSSPAL) are compositionally biased toward low complexity. Basic and acidic residues-rich tracts occupy residues 501–514 (KEGK…EKET) and 566–583 (IRNE…KEAK). Residues 618-633 (LPPQSTTLLPTTSLQP) are compositionally biased toward low complexity. Pro residues predominate over residues 640-652 (AIPPKATPEPAIP). Thr-666 bears the Phosphothreonine mark. The span at 689–703 (PAIASTATTLPTTTS) shows a compositional bias: low complexity. Over residues 875–893 (AEASSDSIFHSQGTPNSFT) the composition is skewed to polar residues. A compositionally biased stretch (basic and acidic residues) spans 920 to 931 (LGRDAEGTELSR). Residues 986 to 1001 (IPPPPEFSNDPEPPAP) are compositionally biased toward pro residues. Residues 1007-1019 (GRQSSPPRNNYSD) show a composition bias toward polar residues. The span at 1026–1035 (AGPGAPPALG) shows a compositional bias: low complexity. An Asymmetric dimethylarginine modification is found at Arg-1044. Residues 1069 to 1160 (GEPHRGPGLP…SPYTTTRYGS (92 aa)) are disordered. An omega-N-methylarginine mark is found at Arg-1073 and Arg-1084. Arg-1157 carries the asymmetric dimethylarginine modification.

This is an uncharacterized protein from Homo sapiens (Human).